Here is an 896-residue protein sequence, read N- to C-terminus: Translation initiation factor IF-2 (896 aa).

The tract at residues 46-315 (LAHLNRQHGG…FNKPAQPVER (270 aa)) is disordered. The span at 99–247 (SASEEQEREE…RKQQEKEDVH (149 aa)) shows a compositional bias: basic and acidic residues. Basic residues predominate over residues 269 to 278 (SRKRGKKRRR). Residues 279–288 (KDEESDDTPR) show a composition bias toward basic and acidic residues. One can recognise a tr-type G domain in the interval 396 to 565 (PRAPVVTVMG…LLQSEVLDLR (170 aa)). A G1 region spans residues 405-412 (GHVDHGKT). 405–412 (GHVDHGKT) lines the GTP pocket. The segment at 430 to 434 (GITQH) is G2. The segment at 451-454 (DTPG) is G3. GTP contacts are provided by residues 451 to 455 (DTPGH) and 505 to 508 (NKMD). Residues 505–508 (NKMD) form a G4 region. A G5 region spans residues 541-543 (SAH).

The protein belongs to the TRAFAC class translation factor GTPase superfamily. Classic translation factor GTPase family. IF-2 subfamily.

It localises to the cytoplasm. Its function is as follows. One of the essential components for the initiation of protein synthesis. Protects formylmethionyl-tRNA from spontaneous hydrolysis and promotes its binding to the 30S ribosomal subunits. Also involved in the hydrolysis of GTP during the formation of the 70S ribosomal complex. In Idiomarina loihiensis (strain ATCC BAA-735 / DSM 15497 / L2-TR), this protein is Translation initiation factor IF-2.